We begin with the raw amino-acid sequence, 195 residues long: Probable GTP-binding protein EngB (195 aa).

The region spanning 22–195 is the EngB-type G domain; sequence GLPEIALAGR…WGAIKKMINR (174 aa). GTP is bound by residues 30 to 37, 57 to 61, 75 to 78, 142 to 145, and 174 to 176; these read GRSNVGKS, GKTQT, DVPG, TKAD, and FSS. Residues serine 37 and threonine 59 each contribute to the Mg(2+) site.

The protein belongs to the TRAFAC class TrmE-Era-EngA-EngB-Septin-like GTPase superfamily. EngB GTPase family. Requires Mg(2+) as cofactor.

Necessary for normal cell division and for the maintenance of normal septation. Functionally, binds GTP and GDP. This Bacillus subtilis (strain 168) protein is Probable GTP-binding protein EngB.